A 250-amino-acid polypeptide reads, in one-letter code: UPF0494 membrane protein PB2B2.07c (250 aa).

The next 3 helical transmembrane spans lie at 98 to 118 (WPLLIIWCILIVFAIDKNFEV), 144 to 164 (IAIYICLFILLLLGLICMFPL), and 179 to 199 (MIIAVLGAALGMIIAALGATI).

Belongs to the UPF0494 family.

The protein resides in the cytoplasm. It localises to the endoplasmic reticulum. Its subcellular location is the golgi apparatus. The protein localises to the membrane. This Schizosaccharomyces pombe (strain 972 / ATCC 24843) (Fission yeast) protein is UPF0494 membrane protein PB2B2.07c.